A 197-amino-acid chain; its full sequence is Dephospho-CoA kinase (197 aa).

Residues 2-197 (IIGITGGIAS…SALLSLANPR (196 aa)) enclose the DPCK domain. Position 10–15 (10–15 (ASGKST)) interacts with ATP.

The protein belongs to the CoaE family.

The protein localises to the cytoplasm. It catalyses the reaction 3'-dephospho-CoA + ATP = ADP + CoA + H(+). It participates in cofactor biosynthesis; coenzyme A biosynthesis; CoA from (R)-pantothenate: step 5/5. In terms of biological role, catalyzes the phosphorylation of the 3'-hydroxyl group of dephosphocoenzyme A to form coenzyme A. The polypeptide is Dephospho-CoA kinase (Streptococcus pyogenes serotype M3 (strain ATCC BAA-595 / MGAS315)).